The chain runs to 174 residues: Large ribosomal subunit protein uL10 (174 aa).

It belongs to the universal ribosomal protein uL10 family. In terms of assembly, part of the ribosomal stalk of the 50S ribosomal subunit. The N-terminus interacts with L11 and the large rRNA to form the base of the stalk. The C-terminus forms an elongated spine to which L12 dimers bind in a sequential fashion forming a multimeric L10(L12)X complex.

Forms part of the ribosomal stalk, playing a central role in the interaction of the ribosome with GTP-bound translation factors. The chain is Large ribosomal subunit protein uL10 from Methylobacillus flagellatus (strain ATCC 51484 / DSM 6875 / VKM B-1610 / KT).